The chain runs to 586 residues: SPbeta prophage-derived uncharacterized protein YorA (586 aa).

13 PbH1 repeats span residues 108–147 (AENV…HVHG), 148–170 (SKNV…WIAA), 184–206 (SKSV…ATNG), 207–235 (CEGL…DLEG), 246–268 (PYEL…TAHT), 288–313 (STDV…DSVG), 320–341 (GNRI…MIRG), 364–384 (AEDV…QIQV), 387–410 (SSDI…KVMD), 411–432 (SNDV…YCER), 435–456 (AVRI…YWDK), 481–504 (MYNI…HLIG), and 505–531 (GSEH…YLNG).

The protein is SPbeta prophage-derived uncharacterized protein YorA (yorA) of Bacillus subtilis (strain 168).